A 140-amino-acid polypeptide reads, in one-letter code: Anti-sigma F factor (140 aa).

This sequence belongs to the anti-sigma-factor family.

The catalysed reaction is L-seryl-[protein] + ATP = O-phospho-L-seryl-[protein] + ADP + H(+). It catalyses the reaction L-threonyl-[protein] + ATP = O-phospho-L-threonyl-[protein] + ADP + H(+). Its function is as follows. Binds to sigma F and blocks its ability to form an RNA polymerase holoenzyme (E-sigma F). Phosphorylates SpoIIAA on a serine residue. This phosphorylation may enable SpoIIAA to act as an anti-anti-sigma factor that counteracts SpoIIAB and thus releases sigma F from inhibition. This Clostridium perfringens (strain ATCC 13124 / DSM 756 / JCM 1290 / NCIMB 6125 / NCTC 8237 / Type A) protein is Anti-sigma F factor.